The chain runs to 197 residues: Chalcone--flavanone isomerase 2 (197 aa).

Substrate contacts are provided by Thr23, Asn88, and Thr165.

This sequence belongs to the chalcone isomerase family.

The enzyme catalyses a chalcone = a flavanone.. It participates in secondary metabolite biosynthesis; flavonoid biosynthesis. Its function is as follows. Catalyzes the intramolecular cyclization of bicyclic chalcones into tricyclic (S)-flavanones. Responsible for the isomerization of 4,2',4',6'-tetrahydroxychalcone (also termed chalcone) into naringenin. This Medicago sativa (Alfalfa) protein is Chalcone--flavanone isomerase 2 (CHI2).